Reading from the N-terminus, the 366-residue chain is Chorismate synthase (366 aa).

Residues Arg48 and Arg54 each contribute to the NADP(+) site. Residues 125-127, 238-239, Gly278, 293-297, and Arg319 each bind FMN; these read RSS, NA, and KPTSS.

The protein belongs to the chorismate synthase family. As to quaternary structure, homotetramer. FMNH2 serves as cofactor.

The enzyme catalyses 5-O-(1-carboxyvinyl)-3-phosphoshikimate = chorismate + phosphate. The protein operates within metabolic intermediate biosynthesis; chorismate biosynthesis; chorismate from D-erythrose 4-phosphate and phosphoenolpyruvate: step 7/7. Catalyzes the anti-1,4-elimination of the C-3 phosphate and the C-6 proR hydrogen from 5-enolpyruvylshikimate-3-phosphate (EPSP) to yield chorismate, which is the branch point compound that serves as the starting substrate for the three terminal pathways of aromatic amino acid biosynthesis. This reaction introduces a second double bond into the aromatic ring system. The polypeptide is Chorismate synthase (Neisseria gonorrhoeae (strain NCCP11945)).